The primary structure comprises 89 residues: UPF0298 protein GTNG_0961 (89 aa).

The protein belongs to the UPF0298 family.

Its subcellular location is the cytoplasm. This chain is UPF0298 protein GTNG_0961, found in Geobacillus thermodenitrificans (strain NG80-2).